We begin with the raw amino-acid sequence, 95 residues long: MGLERDGILSQDLHFNEVFVSLWQNKLTRYEIARVISARALQLAMGAPALIDINNISLTDVISIAEEEFKRGVLPITIRRRLPNGKIILLSLRKS.

It belongs to the archaeal Rpo6/eukaryotic RPB6 RNA polymerase subunit family. As to quaternary structure, part of the RNA polymerase complex.

Its subcellular location is the cytoplasm. The enzyme catalyses RNA(n) + a ribonucleoside 5'-triphosphate = RNA(n+1) + diphosphate. DNA-dependent RNA polymerase (RNAP) catalyzes the transcription of DNA into RNA using the four ribonucleoside triphosphates as substrates. This Saccharolobus islandicus (strain M.16.27) (Sulfolobus islandicus) protein is DNA-directed RNA polymerase subunit Rpo6.